A 339-amino-acid polypeptide reads, in one-letter code: Lipoyl synthase (339 aa).

Residues 13-35 (RPKLDAPARPRHPEKAHRPDTAI) are disordered. C68, C73, C79, C94, C98, C101, and S307 together coordinate [4Fe-4S] cluster. Residues 80-296 (WEKRHATFMI…ETTAYAKGFL (217 aa)) form the Radical SAM core domain.

The protein belongs to the radical SAM superfamily. Lipoyl synthase family. It depends on [4Fe-4S] cluster as a cofactor.

Its subcellular location is the cytoplasm. It carries out the reaction [[Fe-S] cluster scaffold protein carrying a second [4Fe-4S](2+) cluster] + N(6)-octanoyl-L-lysyl-[protein] + 2 oxidized [2Fe-2S]-[ferredoxin] + 2 S-adenosyl-L-methionine + 4 H(+) = [[Fe-S] cluster scaffold protein] + N(6)-[(R)-dihydrolipoyl]-L-lysyl-[protein] + 4 Fe(3+) + 2 hydrogen sulfide + 2 5'-deoxyadenosine + 2 L-methionine + 2 reduced [2Fe-2S]-[ferredoxin]. It participates in protein modification; protein lipoylation via endogenous pathway; protein N(6)-(lipoyl)lysine from octanoyl-[acyl-carrier-protein]: step 2/2. In terms of biological role, catalyzes the radical-mediated insertion of two sulfur atoms into the C-6 and C-8 positions of the octanoyl moiety bound to the lipoyl domains of lipoate-dependent enzymes, thereby converting the octanoylated domains into lipoylated derivatives. This is Lipoyl synthase from Methylorubrum extorquens (strain CM4 / NCIMB 13688) (Methylobacterium extorquens).